The chain runs to 382 residues: Alkanesulfonate monooxygenase (382 aa).

The protein belongs to the SsuD family. Homotetramer.

The enzyme catalyses an alkanesulfonate + FMNH2 + O2 = an aldehyde + FMN + sulfite + H2O + 2 H(+). Catalyzes the desulfonation of aliphatic sulfonates. The polypeptide is Alkanesulfonate monooxygenase (Buttiauxella sp. (strain PNBS)).